The primary structure comprises 220 residues: 7-cyano-7-deazaguanine synthase (220 aa).

11–21 (VSGGMDSVTLM) lines the ATP pocket. Zn(2+) is bound by residues cysteine 186, cysteine 194, cysteine 197, and cysteine 200.

It belongs to the QueC family. The cofactor is Zn(2+).

It carries out the reaction 7-carboxy-7-deazaguanine + NH4(+) + ATP = 7-cyano-7-deazaguanine + ADP + phosphate + H2O + H(+). The protein operates within purine metabolism; 7-cyano-7-deazaguanine biosynthesis. Its function is as follows. Catalyzes the ATP-dependent conversion of 7-carboxy-7-deazaguanine (CDG) to 7-cyano-7-deazaguanine (preQ(0)). In Porphyromonas gingivalis (strain ATCC 33277 / DSM 20709 / CIP 103683 / JCM 12257 / NCTC 11834 / 2561), this protein is 7-cyano-7-deazaguanine synthase.